Consider the following 199-residue polypeptide: Large ribosomal subunit protein uL10 (199 aa).

Belongs to the universal ribosomal protein uL10 family. As to quaternary structure, part of the ribosomal stalk of the 50S ribosomal subunit. The N-terminus interacts with L11 and the large rRNA to form the base of the stalk. The C-terminus forms an elongated spine to which L12 dimers bind in a sequential fashion forming a multimeric L10(L12)X complex.

Its function is as follows. Forms part of the ribosomal stalk, playing a central role in the interaction of the ribosome with GTP-bound translation factors. This Aquifex aeolicus (strain VF5) protein is Large ribosomal subunit protein uL10 (rplJ).